Consider the following 249-residue polypeptide: uncharacterized protein (249 aa).

This sequence belongs to the HAD-like hydrolase superfamily. CbbY/CbbZ/Gph/YieH family.

This is an uncharacterized protein from Schizosaccharomyces pombe (strain 972 / ATCC 24843) (Fission yeast).